Here is a 335-residue protein sequence, read N- to C-terminus: Nuclear envelope-associated protein 2 (335 aa).

Coiled-coil stretches lie at residues 55 to 85 (RKEAEKKAKNMEMEICKLQKKLEDRNCELVA) and 125 to 260 (CSVL…LKKK). The Bipartite nuclear localization signal motif lies at 239–260 (KTKELESQLERQRRADQELKKK). Residues 312-329 (FWDTSGFKIVVSMSMLIL) form a helical membrane-spanning segment.

As to quaternary structure, forms homomers and heteromers with NEAP1 and NEAP3. Interacts with SUN1 and SUN2.

Its subcellular location is the nucleus inner membrane. The protein resides in the nucleus. The protein localises to the nucleoplasm. In Arabidopsis thaliana (Mouse-ear cress), this protein is Nuclear envelope-associated protein 2.